Consider the following 185-residue polypeptide: ATP synthase subunit b 2 (185 aa).

The disordered stretch occupies residues 1–23; that stretch reads MAEGHGDAKGATAHTAADGGHKA. The span at 9 to 18 shows a compositional bias: low complexity; sequence KGATAHTAAD. A helical transmembrane segment spans residues 37 to 57; the sequence is LVSLTIAFVALYLIVSKIILP.

The protein belongs to the ATPase B chain family. In terms of assembly, F-type ATPases have 2 components, F(1) - the catalytic core - and F(0) - the membrane proton channel. F(1) has five subunits: alpha(3), beta(3), gamma(1), delta(1), epsilon(1). F(0) has three main subunits: a(1), b(2) and c(10-14). The alpha and beta chains form an alternating ring which encloses part of the gamma chain. F(1) is attached to F(0) by a central stalk formed by the gamma and epsilon chains, while a peripheral stalk is formed by the delta and b chains.

The protein resides in the cell inner membrane. F(1)F(0) ATP synthase produces ATP from ADP in the presence of a proton or sodium gradient. F-type ATPases consist of two structural domains, F(1) containing the extramembraneous catalytic core and F(0) containing the membrane proton channel, linked together by a central stalk and a peripheral stalk. During catalysis, ATP synthesis in the catalytic domain of F(1) is coupled via a rotary mechanism of the central stalk subunits to proton translocation. In terms of biological role, component of the F(0) channel, it forms part of the peripheral stalk, linking F(1) to F(0). The b'-subunit is a diverged and duplicated form of b found in plants and photosynthetic bacteria. This is ATP synthase subunit b 2 (atpF2) from Rhodopseudomonas palustris (strain BisB5).